A 707-amino-acid polypeptide reads, in one-letter code: Elongation factor G (707 aa).

The tr-type G domain occupies E8–T290. Residues A17–T24, D88–H92, and N142–D145 contribute to the GTP site.

This sequence belongs to the TRAFAC class translation factor GTPase superfamily. Classic translation factor GTPase family. EF-G/EF-2 subfamily.

Its subcellular location is the cytoplasm. Functionally, catalyzes the GTP-dependent ribosomal translocation step during translation elongation. During this step, the ribosome changes from the pre-translocational (PRE) to the post-translocational (POST) state as the newly formed A-site-bound peptidyl-tRNA and P-site-bound deacylated tRNA move to the P and E sites, respectively. Catalyzes the coordinated movement of the two tRNA molecules, the mRNA and conformational changes in the ribosome. In Idiomarina loihiensis (strain ATCC BAA-735 / DSM 15497 / L2-TR), this protein is Elongation factor G.